An 808-amino-acid polypeptide reads, in one-letter code: Dynamin-related protein 3A (808 aa).

Residues 1 to 31 (MTIEEVSGETPPSTPPSSSTPSPSSSTTNAA) are disordered. Residues 16 to 28 (PSSSTPSPSSSTT) are compositionally biased toward low complexity. The region spanning 56 to 330 (TIALPQVVVV…LVQHIKVLLP (275 aa)) is the Dynamin-type G domain. The tract at residues 66 to 73 (GSQSSGKS) is G1 motif. 66-73 (GSQSSGKS) contacts GTP. Residues 92–94 (CTR) form a G2 motif region. The G3 motif stretch occupies residues 172–175 (DLPG). Residues 172 to 176 (DLPGI) and 241 to 244 (TKLD) contribute to the GTP site. The interval 241–244 (TKLD) is G4 motif. A G5 motif region spans residues 271 to 274 (VNRC). Residues 548–578 (IPHPVARPKDTVEPDRTSSSTSQVKSRSFLG) are disordered. Positions 554–563 (RPKDTVEPDR) are enriched in basic and acidic residues. The segment covering 564–575 (TSSSTSQVKSRS) has biased composition (low complexity). Positions 670–761 (IQITKLLLRS…TLDELPLEAD (92 aa)) constitute a GED domain. The disordered stretch occupies residues 774–808 (LTSSKYSTSSSYSASPSTTRRSRRAGDQHQNGYGF). Positions 775–792 (TSSKYSTSSSYSASPSTT) are enriched in low complexity.

This sequence belongs to the TRAFAC class dynamin-like GTPase superfamily. Dynamin/Fzo/YdjA family. In terms of assembly, homooligomer. Interacts with ARC5 on peroxisomes and ELM1 on mitochondria. Ubiquitous. Preferentially expressed in flowers.

Its subcellular location is the mitochondrion. The protein localises to the peroxisome. Its function is as follows. Involved in the control of mitochondrial and peroxisomal division and morphology. In association with PEX11C, PEX11D, PEX11E and FIS1B, is involved in cell cycle-associated constitutive self-replication of preexisting peroxisomes. The protein is Dynamin-related protein 3A (DRP3A) of Arabidopsis thaliana (Mouse-ear cress).